The following is a 109-amino-acid chain: Iron-sulfur cluster assembly protein CyaY (109 aa).

Belongs to the frataxin family.

Its function is as follows. Involved in iron-sulfur (Fe-S) cluster assembly. May act as a regulator of Fe-S biogenesis. This is Iron-sulfur cluster assembly protein CyaY from Shewanella putrefaciens (strain CN-32 / ATCC BAA-453).